A 939-amino-acid polypeptide reads, in one-letter code: Valine--tRNA ligase (939 aa).

Residues P47 to H57 carry the 'HIGH' region motif. A 'KMSKS' region motif is present at residues K563 to S567. K566 provides a ligand contact to ATP. The stretch at E874–L939 forms a coiled coil.

It belongs to the class-I aminoacyl-tRNA synthetase family. ValS type 1 subfamily. As to quaternary structure, monomer.

Its subcellular location is the cytoplasm. The enzyme catalyses tRNA(Val) + L-valine + ATP = L-valyl-tRNA(Val) + AMP + diphosphate. Functionally, catalyzes the attachment of valine to tRNA(Val). As ValRS can inadvertently accommodate and process structurally similar amino acids such as threonine, to avoid such errors, it has a 'posttransfer' editing activity that hydrolyzes mischarged Thr-tRNA(Val) in a tRNA-dependent manner. The protein is Valine--tRNA ligase of Chlamydia trachomatis serovar A (strain ATCC VR-571B / DSM 19440 / HAR-13).